A 144-amino-acid chain; its full sequence is Bacilliredoxin BT9727_3899 (144 aa).

It belongs to the bacilliredoxin family.

The sequence is that of Bacilliredoxin BT9727_3899 from Bacillus thuringiensis subsp. konkukian (strain 97-27).